The primary structure comprises 343 residues: Ribosome production factor 1 (343 aa).

Basic and acidic residues-rich tracts occupy residues 1–10 (MAEKKGPEAK) and 82–91 (EREALGDKAP). Disordered regions lie at residues 1 to 51 (MAEK…LSEI) and 77 to 97 (KKRK…PVPK). The region spanning 136 to 319 (PKILITTSDR…LRSLQKGTFD (184 aa)) is the Brix domain. The tract at residues 297–314 (VGIQELGPRFTLKLRSLQ) is RNA-binding.

Its subcellular location is the nucleus. It is found in the nucleolus. Its function is as follows. May be required for ribosome biogenesis. The sequence is that of Ribosome production factor 1 (rpf1) from Xenopus laevis (African clawed frog).